The following is a 180-amino-acid chain: ADP-ribosylation factor-like protein 1 (180 aa).

The N-myristoyl glycine moiety is linked to residue glycine 2. GTP-binding positions include 23–30, 66–70, and 125–128; these read GLDGAGKT, DLGGQ, and NKQD.

This sequence belongs to the small GTPase superfamily. Arf family. Expressed in neuronal cells. Expression in hypodermal tissues is absent.

The protein localises to the golgi apparatus. The protein resides in the cytoplasm. Its subcellular location is the cytoplasmic granule. In terms of biological role, GTP-binding protein that may be involved in protein trafficking; may modulate vesicle budding and uncoating within the Golgi apparatus. Plays a role in male tail tip morphogenesis. In Caenorhabditis elegans, this protein is ADP-ribosylation factor-like protein 1.